The sequence spans 585 residues: SCF E3 ubiquitin ligase complex F-box protein grrA (585 aa).

Residues methionine 1–phenylalanine 10 show a composition bias toward polar residues. 2 disordered regions span residues methionine 1 to phenylalanine 34 and aspartate 41 to proline 60. Positions serine 11–glutamate 25 are enriched in low complexity. The F-box domain occupies proline 65–asparagine 113. LRR repeat units lie at residues threonine 147–asparagine 171, cysteine 172–glutamate 197, leucine 198–glycine 223, cysteine 224–glycine 249, valine 250–glutamate 275, cysteine 276–histidine 301, cysteine 302–alanine 329, cysteine 330–lysine 355, cysteine 356–histidine 381, cysteine 382–cysteine 407, cysteine 408–lysine 432, cysteine 433–tyrosine 465, and cysteine 466–glycine 491.

Part of a SCF E3 ubiquitin ligase complex. In terms of tissue distribution, specifically expressed in ascus mother cells.

The protein resides in the cytoplasm. In terms of biological role, involved in meiosis and required for ascospore formation. Involved in substrate recognition in ubiquitin-dependent degradation. The polypeptide is SCF E3 ubiquitin ligase complex F-box protein grrA (grrA) (Emericella nidulans (strain FGSC A4 / ATCC 38163 / CBS 112.46 / NRRL 194 / M139) (Aspergillus nidulans)).